Here is a 134-residue protein sequence, read N- to C-terminus: Large ribosomal subunit protein bL20 (134 aa).

Belongs to the bacterial ribosomal protein bL20 family.

Its function is as follows. Binds directly to 23S ribosomal RNA and is necessary for the in vitro assembly process of the 50S ribosomal subunit. It is not involved in the protein synthesizing functions of that subunit. This Rhizobium leguminosarum bv. trifolii (strain WSM2304) protein is Large ribosomal subunit protein bL20.